Consider the following 372-residue polypeptide: MPANLTEGSFHANQTVPMLDSSPVACTEIVTFTEALEAEEWGSFYSSFKTEQLITLWVLFVFTIVGNSVVLFSTWRRKRKSRMTFFVTQLAITDSFTGLINILTDIIWRFTGDFMAPDLVCRIVRYLQVVLLYASTYVLVSLSIDRYHAIVYPMKFLQGAEKQAKVLIGIAWSLSFLFSIPTLIIFGKRTLSNGEVQCWALWPDDSYWTPYMTIVAFLVYFIPLTIISVIYGLVIRTIWIKSKAHETVISNCSDGELCCSYNRGLISKAKIKAIKYSIVIILAFICCWSPYFLFDMLDNFNLLPDTKERFYASVIIQNLPALNSAINPLIYCIFSGSLCSPCKVQRSQDSRMTYRERSERHEMQILSKPEFI.

The Extracellular segment spans residues 1–52 (MPANLTEGSFHANQTVPMLDSSPVACTEIVTFTEALEAEEWGSFYSSFKTEQ). N-linked (GlcNAc...) asparagine glycans are attached at residues Asn-4 and Asn-13. Residues 53–73 (LITLWVLFVFTIVGNSVVLFS) traverse the membrane as a helical segment. Topologically, residues 74 to 82 (TWRRKRKSR) are cytoplasmic. A helical transmembrane segment spans residues 83–103 (MTFFVTQLAITDSFTGLINIL). Topologically, residues 104 to 122 (TDIIWRFTGDFMAPDLVCR) are extracellular. A disulfide bond links Cys-121 and Cys-198. A helical membrane pass occupies residues 123-143 (IVRYLQVVLLYASTYVLVSLS). Topologically, residues 144–165 (IDRYHAIVYPMKFLQGAEKQAK) are cytoplasmic. Residues 166–186 (VLIGIAWSLSFLFSIPTLIIF) form a helical membrane-spanning segment. The Extracellular segment spans residues 187–213 (GKRTLSNGEVQCWALWPDDSYWTPYMT). The chain crosses the membrane as a helical span at residues 214 to 234 (IVAFLVYFIPLTIISVIYGLV). The Cytoplasmic segment spans residues 235–276 (IRTIWIKSKAHETVISNCSDGELCCSYNRGLISKAKIKAIKY). A helical membrane pass occupies residues 277–297 (SIVIILAFICCWSPYFLFDML). At 298–313 (DNFNLLPDTKERFYAS) the chain is on the extracellular side. A helical membrane pass occupies residues 314 to 334 (VIIQNLPALNSAINPLIYCIF). Residues 335 to 372 (SGSLCSPCKVQRSQDSRMTYRERSERHEMQILSKPEFI) lie on the Cytoplasmic side of the membrane.

This sequence belongs to the G-protein coupled receptor 1 family. Vasopressin/oxytocin receptor subfamily.

The protein localises to the cell membrane. Functionally, G-protein coupled receptor for neuropeptide S (NPS). Promotes mobilization of intracellular Ca(2+) stores. Inhibits cell growth in response to NPS binding. Involved in pathogenesis of asthma and other IgE-mediated diseases. This Rattus norvegicus (Rat) protein is Neuropeptide S receptor (Npsr1).